The primary structure comprises 87 residues: U15-lycotoxin-Ls1f (87 aa).

An N-terminal signal peptide occupies residues 1 to 20; the sequence is MNSKIFAVLLLLGLLSCVLS. Positions 21 to 66 constitute a WAP domain; that stretch reads DQYCPKSSITACKKMNIRNDCCKDDDCTGGSWCCATPCGNFCKYPT. Disulfide bonds link C24/C54, C32/C58, C41/C53, C42/C80, and C47/C62.

It belongs to the venom protein 11 family. 01 (wap-1) subfamily. Contains 5 disulfide bonds. In terms of tissue distribution, expressed by the venom gland.

It localises to the secreted. Functionally, has antibacterial activity. The chain is U15-lycotoxin-Ls1f from Lycosa singoriensis (Wolf spider).